The primary structure comprises 256 residues: 1-(5-phosphoribosyl)-5-[(5-phosphoribosylamino)methylideneamino] imidazole-4-carboxamide isomerase (256 aa).

Asp-8 (proton acceptor) is an active-site residue. Asp-129 functions as the Proton donor in the catalytic mechanism.

This sequence belongs to the HisA/HisF family.

It localises to the cytoplasm. It catalyses the reaction 1-(5-phospho-beta-D-ribosyl)-5-[(5-phospho-beta-D-ribosylamino)methylideneamino]imidazole-4-carboxamide = 5-[(5-phospho-1-deoxy-D-ribulos-1-ylimino)methylamino]-1-(5-phospho-beta-D-ribosyl)imidazole-4-carboxamide. The protein operates within amino-acid biosynthesis; L-histidine biosynthesis; L-histidine from 5-phospho-alpha-D-ribose 1-diphosphate: step 4/9. The chain is 1-(5-phosphoribosyl)-5-[(5-phosphoribosylamino)methylideneamino] imidazole-4-carboxamide isomerase from Synechococcus sp. (strain CC9311).